We begin with the raw amino-acid sequence, 557 residues long: Urocanate hydratase (557 aa).

NAD(+) contacts are provided by residues 53-54, Gln131, 177-179, Glu197, Arg202, 243-244, 264-268, 274-275, and Tyr323; these read GG, GMG, NA, QTSAH, and YL. The active site involves Cys411. Gly493 provides a ligand contact to NAD(+).

Belongs to the urocanase family. The cofactor is NAD(+).

It is found in the cytoplasm. It catalyses the reaction 4-imidazolone-5-propanoate = trans-urocanate + H2O. It functions in the pathway amino-acid degradation; L-histidine degradation into L-glutamate; N-formimidoyl-L-glutamate from L-histidine: step 2/3. Catalyzes the conversion of urocanate to 4-imidazolone-5-propionate. This chain is Urocanate hydratase, found in Pseudomonas putida (strain ATCC 700007 / DSM 6899 / JCM 31910 / BCRC 17059 / LMG 24140 / F1).